Reading from the N-terminus, the 1432-residue chain is Probable ATP-dependent RNA helicase spindle-E (1432 aa).

A Helicase ATP-binding domain is found at 124–291 (LAAINAHPVV…FTTTNSVPPV (168 aa)). Residue 137–144 (GQTGCGKT) participates in ATP binding. The DEAH box signature appears at 237–240 (DEVH). A Helicase C-terminal domain is found at 337 to 524 (KIIMVIDNME…NSVLRAKELE (188 aa)). The 64-residue stretch at 936 to 999 (AGAITKGMMV…RLMPKELIQQ (64 aa)) folds into the Tudor domain.

Belongs to the DEAD box helicase family. DEAH subfamily.

It is found in the cytoplasm. The catalysed reaction is ATP + H2O = ADP + phosphate + H(+). In terms of biological role, probable ATP-binding RNA helicase which plays a central role during spermatogenesis and oogenesis by repressing transposable elements and preventing their mobilization, which is essential for the germline integrity. Acts via the piRNA metabolic process, which mediates the repression of transposable elements during meiosis by forming complexes composed of piRNAs and Piwi and govern the methylation and subsequent repression of transposons. Involved in the repression of LTR retrotransposon copia. Also involved in telomere regulation by repressing specialized telomeric retroelements HeT-A, TAHRE, and TART; Drosophila telomeres being maintained by transposition of specialized telomeric retroelements. Involved in telomeric trans-silencing, a repression mechanism by which a transposon or a transgene inserted in subtelomeric heterochromatin has the capacity to repress in trans in the female germline, a homologous transposon, or transgene located in euchromatin. Involved in the repression of testis-expressed Stellate genes by the homologous Su(Ste) repeats. Required for anteroposterior and dorsoventral axis formation during oogenesis. The polypeptide is Probable ATP-dependent RNA helicase spindle-E (spn-E) (Drosophila erecta (Fruit fly)).